We begin with the raw amino-acid sequence, 317 residues long: tRNA(Ile)-lysidine synthase (317 aa).

ATP is bound at residue 30-35 (SGGSDS).

It belongs to the tRNA(Ile)-lysidine synthase family.

It localises to the cytoplasm. The enzyme catalyses cytidine(34) in tRNA(Ile2) + L-lysine + ATP = lysidine(34) in tRNA(Ile2) + AMP + diphosphate + H(+). Its function is as follows. Ligates lysine onto the cytidine present at position 34 of the AUA codon-specific tRNA(Ile) that contains the anticodon CAU, in an ATP-dependent manner. Cytidine is converted to lysidine, thus changing the amino acid specificity of the tRNA from methionine to isoleucine. The protein is tRNA(Ile)-lysidine synthase of Chlamydia felis (strain Fe/C-56) (Chlamydophila felis).